Consider the following 178-residue polypeptide: ATP synthase subunit delta (178 aa).

The protein belongs to the ATPase delta chain family. F-type ATPases have 2 components, F(1) - the catalytic core - and F(0) - the membrane proton channel. F(1) has five subunits: alpha(3), beta(3), gamma(1), delta(1), epsilon(1). F(0) has three main subunits: a(1), b(2) and c(10-14). The alpha and beta chains form an alternating ring which encloses part of the gamma chain. F(1) is attached to F(0) by a central stalk formed by the gamma and epsilon chains, while a peripheral stalk is formed by the delta and b chains.

It is found in the cell inner membrane. F(1)F(0) ATP synthase produces ATP from ADP in the presence of a proton or sodium gradient. F-type ATPases consist of two structural domains, F(1) containing the extramembraneous catalytic core and F(0) containing the membrane proton channel, linked together by a central stalk and a peripheral stalk. During catalysis, ATP synthesis in the catalytic domain of F(1) is coupled via a rotary mechanism of the central stalk subunits to proton translocation. In terms of biological role, this protein is part of the stalk that links CF(0) to CF(1). It either transmits conformational changes from CF(0) to CF(1) or is implicated in proton conduction. The sequence is that of ATP synthase subunit delta from Pseudomonas putida (strain ATCC 700007 / DSM 6899 / JCM 31910 / BCRC 17059 / LMG 24140 / F1).